A 257-amino-acid polypeptide reads, in one-letter code: tRNA pseudouridine synthase A (257 aa).

D52 serves as the catalytic Nucleophile. Residue Y111 coordinates substrate.

This sequence belongs to the tRNA pseudouridine synthase TruA family. Homodimer.

It catalyses the reaction uridine(38/39/40) in tRNA = pseudouridine(38/39/40) in tRNA. Its function is as follows. Formation of pseudouridine at positions 38, 39 and 40 in the anticodon stem and loop of transfer RNAs. This chain is tRNA pseudouridine synthase A, found in Dinoroseobacter shibae (strain DSM 16493 / NCIMB 14021 / DFL 12).